Here is an 81-residue protein sequence, read N- to C-terminus: Large ribosomal subunit protein eL31 (81 aa).

This sequence belongs to the eukaryotic ribosomal protein eL31 family.

This is Large ribosomal subunit protein eL31 (rpl31e) from Methanothermobacter thermautotrophicus (strain ATCC 29096 / DSM 1053 / JCM 10044 / NBRC 100330 / Delta H) (Methanobacterium thermoautotrophicum).